The primary structure comprises 291 residues: MNETLKCVVRQPSVLGECPVWSVREQVLYWADILAGRLHRLDPRDGSVSTLQLPEELGCFGLREQGGFIVALRSGIYLLDAHGQLGERLAENPTGAEHSRFNDGRVDPWGRFWAGTLWQPRDRNGGQLLRVDAEHRAQVMAGDVMVSNGLAFSPDRAWAYHSDTPNHVLYRYPLDEDGQPGTRQLLREFARGSGGRPDGAAFDSAGCYWSAQFDGGRVLRLSPDGQVLDEIQLPTRWPTMVAFGGEDLRTLYITSSRENRSAEELADWPLSGCVFATRVNVPGCAEPLFAG.

3 residues coordinate a divalent metal cation: Glu17, Asn148, and Asp198. Asp198 acts as the Proton donor/acceptor in catalysis.

It belongs to the SMP-30/CGR1 family. It depends on a divalent metal cation as a cofactor.

The catalysed reaction is 6-deoxy-6-sulfo-D-glucono-1,5-lactone + H2O = 6-deoxy-6-sulfo-D-gluconate + H(+). In terms of biological role, catalyzes the hydrolysis of 6-deoxy-6-sulfo-D-glucono-1,5-lactone to form 6-deoxy-6-sulfo-D-gluconate. Is involved in a degradation pathway of sulfoquinovose (SQ) that allows P.putida SQ1 to use SQ as the sole carbon and energy source for growth. The chain is 6-deoxy-6-sulfogluconolactonase from Pseudomonas putida (Arthrobacter siderocapsulatus).